We begin with the raw amino-acid sequence, 191 residues long: Corrinoid adenosyltransferase (191 aa).

ATP is bound by residues Thr10 to Thr18, Lys28, Arg140 to Ser145, and Asn166.

Belongs to the Cob(I)alamin adenosyltransferase family.

It localises to the cytoplasm. The catalysed reaction is 2 cob(II)yrinate a,c diamide + reduced [electron-transfer flavoprotein] + 2 ATP = 2 adenosylcob(III)yrinate a,c-diamide + 2 triphosphate + oxidized [electron-transfer flavoprotein] + 3 H(+). It catalyses the reaction 2 cob(II)alamin + reduced [electron-transfer flavoprotein] + 2 ATP = 2 adenosylcob(III)alamin + 2 triphosphate + oxidized [electron-transfer flavoprotein] + 3 H(+). It participates in cofactor biosynthesis; adenosylcobalamin biosynthesis; adenosylcobalamin from cob(II)yrinate a,c-diamide: step 2/7. The chain is Corrinoid adenosyltransferase from Mycobacterium leprae (strain TN).